Reading from the N-terminus, the 204-residue chain is AFG2-interacting ribosome maturation factor (204 aa).

In terms of assembly, part of the 55LCC heterohexameric ATPase complex. Does not associate with pre-60S ribosomal particles.

Its subcellular location is the nucleus. The protein resides in the cytoplasm. Its function is as follows. Part of the 55LCC heterohexameric ATPase complex which is chromatin-associated and promotes replisome proteostasis to maintain replication fork progression and genome stability. Required for replication fork progression, sister chromatid cohesion, and chromosome stability. The ATPase activity is specifically enhanced by replication fork DNA and is coupled to cysteine protease-dependent cleavage of replisome substrates in response to replication fork damage. Uses ATPase activity to process replisome substrates in S-phase, facilitating their proteolytic turnover from chromatin to ensure DNA replication and mitotic fidelity. Involved in the cytoplasmic maturation steps of pre-60S ribosomal particles by promoting the release of shuttling protein RSL24D1/RLP24 from the pre-ribosomal particles. The polypeptide is AFG2-interacting ribosome maturation factor (airim) (Xenopus tropicalis (Western clawed frog)).